The following is a 609-amino-acid chain: Membrane-bound O-acyltransferase GUP2 (609 aa).

A signal peptide spans methionine 1–alanine 18. Residues leucine 19–arginine 75 are Lumenal-facing. Residues leucine 76–serine 96 form a helical membrane-spanning segment. Topologically, residues serine 97–asparagine 133 are cytoplasmic. A helical transmembrane segment spans residues phenylalanine 134–phenylalanine 154. Topologically, residues serine 155–valine 169 are lumenal. Residues phenylalanine 170–phenylalanine 190 traverse the membrane as a helical segment. Residues threonine 191–arginine 200 are Cytoplasmic-facing. A helical membrane pass occupies residues leucine 201–methionine 221. Over lysine 222–asparagine 324 the chain is Lumenal. A helical transmembrane segment spans residues phenylalanine 325–threonine 345. Over phenylalanine 346 to lysine 371 the chain is Cytoplasmic. Residues valine 372–alanine 392 form a helical membrane-spanning segment. Residues arginine 393 to alanine 406 are Lumenal-facing. The helical transmembrane segment at methionine 407–phenylalanine 427 threads the bilayer. At arginine 428–proline 474 the chain is on the cytoplasmic side. A helical membrane pass occupies residues phenylalanine 475–tryptophan 495. Histidine 496 is a catalytic residue. Over histidine 496–valine 502 the chain is Lumenal. A helical transmembrane segment spans residues leucine 503–phenylalanine 523. The Cytoplasmic segment spans residues serine 524 to arginine 533. A helical membrane pass occupies residues phenylalanine 534–glycine 554. Residues phenylalanine 555–serine 575 lie on the Lumenal side of the membrane. Residues proline 576–isoleucine 596 form a helical membrane-spanning segment. Topologically, residues arginine 597–cysteine 609 are cytoplasmic.

The protein belongs to the membrane-bound acyltransferase family.

It localises to the endoplasmic reticulum membrane. Functionally, probable membrane-bound O-acyltransferase. Together with GUP1, has an influence on the chemical composition of the yeast extracellular matrix (yECM) in yeast multicellular aggregates, such as biofilms and colonies. This is Membrane-bound O-acyltransferase GUP2 (GUP2) from Saccharomyces cerevisiae (strain ATCC 204508 / S288c) (Baker's yeast).